A 346-amino-acid polypeptide reads, in one-letter code: Nitrilase 1 (346 aa).

N-acetylserine is present on serine 2. Residues 25 to 297 (VRVTIVQSST…EGLVTADIDL (273 aa)) enclose the CN hydrolase domain. Glutamate 65 acts as the Proton acceptor in catalysis. Catalysis depends on lysine 152, which acts as the Proton donor. The active-site Nucleophile is cysteine 186.

The protein belongs to the carbon-nitrogen hydrolase superfamily. Nitrilase family. As to quaternary structure, interacts with DEK3. As to expression, expressed in cotyledons, hypocotyls, leaves, roots, stems, flowers and siliques.

The catalysed reaction is a nitrile + 2 H2O = a carboxylate + NH4(+). Can convert indole-3-acetonitrile to the plant hormone indole-3-acetic acid. This is Nitrilase 1 from Arabidopsis thaliana (Mouse-ear cress).